Here is a 438-residue protein sequence, read N- to C-terminus: uncharacterized protein (438 aa).

Positions 1–20 (MNTRLALVLCAVGSGVLSFS) are cleaved as a signal peptide. Cysteine 21 is lipidated: N-palmitoyl cysteine. A lipid anchor (S-diacylglycerol cysteine) is attached at cysteine 21.

The protein localises to the cell membrane. This is an uncharacterized protein from Treponema pallidum (strain Nichols).